We begin with the raw amino-acid sequence, 33 residues long: DCLGWFSGCDPNNNKCCEGYVCHWKYPWCRYDL.

Disulfide bonds link C2–C17, C9–C22, and C16–C29. L33 bears the Leucine amide mark.

This sequence belongs to the neurotoxin 10 (Hwtx-1) family. 22 (Htx-4) subfamily. Expressed by the venom gland.

The protein resides in the secreted. Gating modifier toxin that traps voltage-sensing domain II of voltage-gated sodium channels in the resting state without significantly altering the voltage-dependence of activation and inactivation, or delay in recovery from inactivation. Inhibits hNav1.7/SCN9A (IC(50)=134 nM), followed in rank order of potency by Nav1.6/SCN8A (IC(50)=191 nM), Nav1.2/SCN2A (IC(50)=239 nM), Nav1.3/SCN3A (IC(50)=547 nM) and Nav1.1/SCN1A (IC(50)=674 nM). Its binding to Nav1.2, Nav1.3 and Nav1.7 is slowly reversible and incomplete, with ~25% of Nav1.2, ~50% of Nav1.3 and ~40% of Nav1.7 channels recovering from block after a 30 minutes washout, respectively. Binds in the aqueous cleft formed between the S1-S2 and S3-S4 loops of each channel subtype, primarily targeting the S3-S4 loop. In Selenotypus sp. (Feather-legged tarantula), this protein is Mu-theraphotoxin-Ssp1a.